Here is a 299-residue protein sequence, read N- to C-terminus: MGKEEEIARIARRLDKMVTRKNAEGAMDLLRELKNMPITLHLLQSTRVGMSVNALRKQSSDEELIALAKSLIKSWKKLLDVSDGKSRNQGRGTPLPTSSSKDASRTTDLSCKKPDPPRTPSTPRITTFPQVPITCDAVRNKCREMLTLALQTDHDHVAVGVNCEHLSSQIEECIFLDVGNTDMKYKNRVRSRISNLKDAKNPGLRRNVLCGAITPQQIAVMTSEEMASDELKEIRKAMTKEAIREHQMARTGGTQTDLFTCNKCRKKNCTYTQVQTRSSDEPMTTYVVCNECGNRWKFC.

One can recognise a TFIIS N-terminal domain in the interval glutamate 5–serine 82. A Glycyl lysine isopeptide (Lys-Gly) (interchain with G-Cter in ubiquitin) cross-link involves residue lysine 57. Serine 59 and serine 100 each carry phosphoserine. The tract at residues serine 82–threonine 127 is disordered. Residues arginine 87–lysine 101 show a composition bias toward polar residues. Residues aspartate 102–proline 116 are compositionally biased toward basic and acidic residues. A TFIIS central domain is found at valine 138–threonine 254. A TFIIS-type zinc finger spans residues aspartate 257–lysine 297. Zn(2+) contacts are provided by cysteine 261, cysteine 264, cysteine 289, and cysteine 292.

Belongs to the TFS-II family. As to quaternary structure, interacts with the basal transcription factor GTF2B. Interacts with REXO1. In terms of tissue distribution, testis and ovary specific. Specific to testicular germ cells.

The protein resides in the nucleus. In terms of biological role, necessary for efficient RNA polymerase II transcription elongation past template-encoded arresting sites. The arresting sites in DNA have the property of trapping a certain fraction of elongating RNA polymerases that pass through, resulting in locked ternary complexes. Cleavage of the nascent transcript by S-II allows the resumption of elongation from the new 3'-terminus. The protein is Transcription elongation factor A protein 2 (Tcea2) of Mus musculus (Mouse).